The chain runs to 81 residues: Albumin-1 (81 aa).

Positions 27 to 34 (LSSVAKMI) are excised as a propeptide.

In terms of processing, three disulfide bonds are probably present. The C-terminal glycine may be removed from A1b.

In terms of biological role, A1b binds to basic 7S globulin (BG) and stimulates its phosphorylation activity. This is Albumin-1 (LEG1) from Lupinus angustifolius (Narrow-leaved blue lupine).